We begin with the raw amino-acid sequence, 502 residues long: Glycerol kinase (502 aa).

Thr-14 contributes to the ADP binding site. The ATP site is built by Thr-14, Thr-15, and Ser-16. Thr-14 lines the sn-glycerol 3-phosphate pocket. Position 18 (Arg-18) interacts with ADP. Positions 84, 85, 136, and 246 each coordinate sn-glycerol 3-phosphate. Positions 84, 85, 136, 246, and 247 each coordinate glycerol. Thr-268 and Gly-311 together coordinate ADP. ATP-binding residues include Thr-268, Gly-311, Gln-315, and Gly-412. ADP is bound by residues Gly-412 and Asn-416.

This sequence belongs to the FGGY kinase family. As to quaternary structure, homotetramer and homodimer (in equilibrium). Heterodimer with EIIA-Glc. Binds 1 zinc ion per glycerol kinase EIIA-Glc dimer. The zinc ion is important for dimerization.

The enzyme catalyses glycerol + ATP = sn-glycerol 3-phosphate + ADP + H(+). It functions in the pathway polyol metabolism; glycerol degradation via glycerol kinase pathway; sn-glycerol 3-phosphate from glycerol: step 1/1. With respect to regulation, activity of this regulatory enzyme is affected by several metabolites. Allosterically and non-competitively inhibited by fructose 1,6-bisphosphate (FBP) and unphosphorylated phosphocarrier protein EIIA-Glc (III-Glc), an integral component of the bacterial phosphotransferase (PTS) system. In terms of biological role, key enzyme in the regulation of glycerol uptake and metabolism. Catalyzes the phosphorylation of glycerol to yield sn-glycerol 3-phosphate. The protein is Glycerol kinase of Escherichia coli O127:H6 (strain E2348/69 / EPEC).